Here is a 262-residue protein sequence, read N- to C-terminus: tRNA pseudouridine synthase A (262 aa).

The active-site Nucleophile is aspartate 52. Tyrosine 103 contributes to the substrate binding site.

It belongs to the tRNA pseudouridine synthase TruA family.

The enzyme catalyses uridine(38/39/40) in tRNA = pseudouridine(38/39/40) in tRNA. Formation of pseudouridine at positions 38, 39 and 40 in the anticodon stem and loop of transfer RNAs. This is tRNA pseudouridine synthase A from Methanococcus maripaludis (strain DSM 14266 / JCM 13030 / NBRC 101832 / S2 / LL).